We begin with the raw amino-acid sequence, 473 residues long: Cytochrome P450 716A2 (473 aa).

A helical membrane pass occupies residues 1-21; the sequence is MYLTIIFLFISSIIFPLLFFL. C420 provides a ligand contact to heme.

Belongs to the cytochrome P450 family. Requires heme as cofactor.

The protein localises to the membrane. Its function is as follows. Possesses triterpene oxidizing activity. Catalyzes the C28 hydroxylation of alpha-amyrin, beta-amyrin, and lupeol, producing uvaol, erythrodiol, and betulin, respectively. Catalyzes the C28 carboxylation of alpha- and beta-amyrin. Possesses 22alpha-hydroxylation activity against alpha- and beta-amaryn. This is Cytochrome P450 716A2 from Arabidopsis thaliana (Mouse-ear cress).